The chain runs to 245 residues: Uridylate kinase (245 aa).

20 to 23 (KLSG) is a binding site for ATP. A UMP-binding site is contributed by glycine 60. ATP-binding residues include glycine 61 and arginine 65. UMP contacts are provided by residues aspartate 80 and 141-148 (AGLPYFST). Tyrosine 175 and aspartate 178 together coordinate ATP.

The protein belongs to the UMP kinase family. As to quaternary structure, homohexamer.

The protein localises to the cytoplasm. The enzyme catalyses UMP + ATP = UDP + ADP. It participates in pyrimidine metabolism; CTP biosynthesis via de novo pathway; UDP from UMP (UMPK route): step 1/1. Inhibited by UTP. In terms of biological role, catalyzes the reversible phosphorylation of UMP to UDP. The polypeptide is Uridylate kinase (Paenarthrobacter aurescens (strain TC1)).